Here is a 225-residue protein sequence, read N- to C-terminus: 2-C-methyl-D-erythritol 4-phosphate cytidylyltransferase (225 aa).

It belongs to the IspD/TarI cytidylyltransferase family. IspD subfamily.

The enzyme catalyses 2-C-methyl-D-erythritol 4-phosphate + CTP + H(+) = 4-CDP-2-C-methyl-D-erythritol + diphosphate. It participates in isoprenoid biosynthesis; isopentenyl diphosphate biosynthesis via DXP pathway; isopentenyl diphosphate from 1-deoxy-D-xylulose 5-phosphate: step 2/6. Its function is as follows. Catalyzes the formation of 4-diphosphocytidyl-2-C-methyl-D-erythritol from CTP and 2-C-methyl-D-erythritol 4-phosphate (MEP). This chain is 2-C-methyl-D-erythritol 4-phosphate cytidylyltransferase, found in Haemophilus influenzae (strain 86-028NP).